The chain runs to 560 residues: DNA ligase B (560 aa).

Lys-124 functions as the N6-AMP-lysine intermediate in the catalytic mechanism.

This sequence belongs to the NAD-dependent DNA ligase family. LigB subfamily.

It carries out the reaction NAD(+) + (deoxyribonucleotide)n-3'-hydroxyl + 5'-phospho-(deoxyribonucleotide)m = (deoxyribonucleotide)n+m + AMP + beta-nicotinamide D-nucleotide.. Its function is as follows. Catalyzes the formation of phosphodiester linkages between 5'-phosphoryl and 3'-hydroxyl groups in double-stranded DNA using NAD as a coenzyme and as the energy source for the reaction. This Escherichia coli O7:K1 (strain IAI39 / ExPEC) protein is DNA ligase B.